A 63-amino-acid chain; its full sequence is Lantipeptide Flvbeta.a (63 aa).

Positions 1–28 are cleaved as a propeptide — cleaved by FlvT; sequence MSEKNMEKAGVVKADELDEMIDETTGGA. 2,3-didehydrobutyrine; by FlvM2 occurs at positions 30, 33, 38, and 39. The segment at residues 43-49 is a cross-link (lanthionine (Ser-Cys); by FlvM2); sequence SKGLQNC. Residues T54 and T55 each carry the 2,3-didehydrobutyrine; by FlvM2 modification.

Post-translationally, maturation of FlvA2 peptides involves the enzymatic conversion of Thr, and Ser into dehydrated AA and the formation of thioether bonds with cysteines. Modifications are processed by the flavecin synthetase FlvM2. This is followed by membrane translocation and cleavage of the modified precursor. In terms of processing, contains DL-lanthionine, when coepressed in E.coli with the flavecin synthetase FlvM2.

It is found in the secreted. Its function is as follows. Lanthionine-containing peptide that does probably not show antibacterial activity, since its analog [+3]Flvbeta.a does not show antibacterial activity against M.luteus. Also does not show antibiotic activity when tested with [Del2]Flvalpha.a, an analog of Flvalpha.a, which is encoded by the same operon than Flvbeta.a. The bactericidal activity of lantibiotics is based on depolarization of energized bacterial cytoplasmic membranes, initiated by the formation of aqueous transmembrane pores. This is Lantipeptide Flvbeta.a from Ruminococcus flavefaciens.